The primary structure comprises 586 residues: MPKPINVRVTTMDAELEFAVQPNTTGKQLFDQVVKTIGLREVWYFGLQYVDNKGFPTWLKLDKKVSAQEVRKENPVQFKFRAKFYPEDVSEELIQDITQKLFFLQVKEGILSDEIYCPPETAVLLGSYAVQAKFGDYSKEAHKAGYLSSERLIPQRVMDQHKLSRDQWEDRIQVWHAEHRGMLKDSAMLEYLKIAQDLEMYGINYFEIKNKKGTDLWLGVDALGLNIYEKNDKLTPKIGFPWSEIRNISFNDKKFVIKPIDKKAPDFVFYAPRLRINKRILQLCMGNHELYMRRRKPDTIEVQQMKAQAREEKHQKQLERQQLESEKKRREAVEQEKEQMLREKEELMMRLQDYEQKTKKAEKELSDQIQRALQLEDERKRAQEESERLEADRVAALRAKEELERQAADQIKSQEQLAAELAEYTAKIALLEEARRRKESEVEEWQHRAREAQDDLVKTKEELHLVMTAPPPPPPPMYEPVSYHVQEHLHEEGAESLGYSAELSSEGILDDRHEEKRITEAEKNERVQRQLLTLSNELSQARDENKRTHNDIIHNENLRQGRDKYKTLRQIRQGNTKQRIDEFEAM.

The FERM domain occupies 2-295 (PKPINVRVTT…GNHELYMRRR (294 aa)). Residue Lys60 is modified to N6-acetyllysine. The short motif at 115–120 (IYCPPE) is the [IL]-x-C-x-x-[DE] motif element. Phosphotyrosine; by PDGFR is present on Tyr146. Residues 244–586 (EIRNISFNDK…KQRIDEFEAM (343 aa)) form an interaction with SCYL3 region. Residues 302–462 (VQQMKAQARE…QDDLVKTKEE (161 aa)) are a coiled coil. Residues 305-340 (MKAQAREEKHQKQLERQQLESEKKRREAVEQEKEQM) are disordered. A compositionally biased stretch (basic and acidic residues) spans 308 to 340 (QAREEKHQKQLERQQLESEKKRREAVEQEKEQM). Phosphotyrosine; by PDGFR is present on Tyr354. A Phosphoserine modification is found at Ser366. At Tyr478 the chain carries Phosphotyrosine. Position 535 is a phosphoserine (Ser535). Thr567 carries the post-translational modification Phosphothreonine; by ROCK2 and PKC/PRKCI.

Interacts with PALS1. Found in a complex with EZR, PODXL and NHERF2. Interacts with MCC, PLEKHG6, PODXL, SCYL3/PACE1, NHERF1, NHERF2 and TMEM8B. Interacts (when phosphorylated) with FES/FPS. Interacts with dimeric S100P, the interaction may be activating through unmasking of F-actin binding sites. Identified in complexes that contain VIM, EZR, AHNAK, BFSP1, BFSP2, ANK2, PLEC, PRX and spectrin. Detected in a complex composed of at least EZR, AHNAK, PPL and PRX. Interacts with PDPN (via cytoplasmic domain); activates RHOA and promotes epithelial-mesenchymal transition. Interacts with SPN/CD43 cytoplasmic tail, CD44 and ICAM2. Interacts with SLC9A3; interaction targets SLC9A3 to the apical membrane. Interacts with SLC9A1; regulates interactions of SLC9A1 with cytoskeletal and promotes stress fiber formation. Interacts with CLIC5; may work together in a complex which also includes RDX and MYO6 to stabilize linkages between the plasma membrane and subjacent actin cytoskeleton at the base of stereocilia. Phosphorylated by tyrosine-protein kinases. Phosphorylation by ROCK2 suppresses the head-to-tail association of the N-terminal and C-terminal halves resulting in an opened conformation which is capable of actin and membrane-binding. In terms of processing, S-nitrosylation is induced by interferon-gamma and oxidatively-modified low-densitity lipoprotein (LDL(ox)) possibly implicating the iNOS-S100A8/9 transnitrosylase complex.

Its subcellular location is the apical cell membrane. It is found in the cell projection. The protein localises to the microvillus membrane. The protein resides in the ruffle membrane. It localises to the cytoplasm. Its subcellular location is the cell cortex. It is found in the cytoskeleton. The protein localises to the microvillus. A head-to-tail association, of the N-terminal and C-terminal halves results in a closed conformation (inactive form) which is incapable of actin or membrane-binding. Its function is as follows. Probably involved in connections of major cytoskeletal structures to the plasma membrane. In epithelial cells, required for the formation of microvilli and membrane ruffles on the apical pole. Along with PLEKHG6, required for normal macropinocytosis. In Oryctolagus cuniculus (Rabbit), this protein is Ezrin (EZR).